The chain runs to 412 residues: Serine hydroxymethyltransferase (412 aa).

(6S)-5,6,7,8-tetrahydrofolate-binding positions include leucine 114 and 118–120; that span reads GHL. Lysine 223 is modified (N6-(pyridoxal phosphate)lysine).

The protein belongs to the SHMT family. Homodimer. The cofactor is pyridoxal 5'-phosphate.

The protein localises to the cytoplasm. The catalysed reaction is (6R)-5,10-methylene-5,6,7,8-tetrahydrofolate + glycine + H2O = (6S)-5,6,7,8-tetrahydrofolate + L-serine. Its pathway is one-carbon metabolism; tetrahydrofolate interconversion. The protein operates within amino-acid biosynthesis; glycine biosynthesis; glycine from L-serine: step 1/1. Catalyzes the reversible interconversion of serine and glycine with tetrahydrofolate (THF) serving as the one-carbon carrier. This reaction serves as the major source of one-carbon groups required for the biosynthesis of purines, thymidylate, methionine, and other important biomolecules. Also exhibits THF-independent aldolase activity toward beta-hydroxyamino acids, producing glycine and aldehydes, via a retro-aldol mechanism. In Mesoplasma florum (strain ATCC 33453 / NBRC 100688 / NCTC 11704 / L1) (Acholeplasma florum), this protein is Serine hydroxymethyltransferase.